Reading from the N-terminus, the 990-residue chain is Leucine--tRNA ligase (990 aa).

The short motif at 74–85 is the 'HIGH' region element; it reads PYPSGKGLHVGH. The tract at residues 573–602 is disordered; that stretch reads LPINLPDVPDYSPKTFDPEDAESDPEAPLS. The 'KMSKS' region motif lies at 763–767; it reads KMGKS. An ATP-binding site is contributed by Lys766.

Belongs to the class-I aminoacyl-tRNA synthetase family.

It localises to the cytoplasm. It carries out the reaction tRNA(Leu) + L-leucine + ATP = L-leucyl-tRNA(Leu) + AMP + diphosphate. This is Leucine--tRNA ligase from Bifidobacterium adolescentis (strain ATCC 15703 / DSM 20083 / NCTC 11814 / E194a).